The primary structure comprises 552 residues: MISKPVDLPVDVVGAYLALRGEHEALQAKHAIAVAEAANAQAMLSDNEALIVALELKIEKLRRELRGQRSERTARLLDQLELQLEELVAAATEDEVAAQAASARTSSVRSFTRKRPVRKPWPDDIERERVVIEPPTTCTCCGGSRLSKLGEDVTETLEEIPRRFKVIETVREKFTCRDCEAISQTPAPFHATPRGFIGPNLLATILFDKFGMHSPLNRQSARFKCEGIDLSTSTLADQVGYATAALMPVFDLIEAHVFAAERLHGDDTTIPIQARDKCTTGRIWTYVCDDRPFGGTAPPAAIYYASSDRRGEHPQKHLAGYGGILQSDCYNGFEPIAVAATKAVPITFAFCHAHARRKFFELADIQKNARDRKRRGKPISPIALEAVKRYDELFEIERQINGLSAEERLAVRQEKSKPLFDDMHEWLTKERAMLSRSSEVIEPIDYMLKRWEGFALFLKDGRVCLTNNAAERALRSVALGRRNWTFAGSQRGADRAAVMLTVITTCRLNDIDPKAWLADVLARIADHPVTRLYELLPWEWKRASAATVMLAA.

This sequence belongs to the transposase 25 family.

This is an uncharacterized protein from Sinorhizobium fredii (strain NBRC 101917 / NGR234).